Reading from the N-terminus, the 319-residue chain is Glycine--tRNA ligase alpha subunit (319 aa).

The protein belongs to the class-II aminoacyl-tRNA synthetase family. In terms of assembly, tetramer of two alpha and two beta subunits.

The protein localises to the cytoplasm. It catalyses the reaction tRNA(Gly) + glycine + ATP = glycyl-tRNA(Gly) + AMP + diphosphate. The chain is Glycine--tRNA ligase alpha subunit from Coxiella burnetii (strain CbuK_Q154) (Coxiella burnetii (strain Q154)).